A 238-amino-acid chain; its full sequence is MTKKVSRRLRELQAKVEDREYGPLDALSLLKETATAKFAEAAEAHIRLGIDPKYTDQQLRTTVALPKGTGQIVRVAVIARGEKVTEASNAGADVFGSEELIDEIQKGRMDFDKLIATPDVMPQVAKLGKMLGPRGLMPSPKGGTVTFDIASAIAEFKAGKLEFRADRTGIVHVMFGKASFSPEDLLVNLKALQETIDRNRPSGAKGRYWRTFYVSATMGPSIRVDINALRDYKLTEAA.

It belongs to the universal ribosomal protein uL1 family. In terms of assembly, part of the 50S ribosomal subunit.

Its function is as follows. Binds directly to 23S rRNA. The L1 stalk is quite mobile in the ribosome, and is involved in E site tRNA release. Functionally, protein L1 is also a translational repressor protein, it controls the translation of the L11 operon by binding to its mRNA. The sequence is that of Large ribosomal subunit protein uL1 from Trichormus variabilis (strain ATCC 29413 / PCC 7937) (Anabaena variabilis).